The primary structure comprises 1870 residues: MDFSTMQVVVGFLKTSMGLQSIRDIVQKAKVDEKDKTLLHIHLCFFHANEMARDLNEGMDVSQIHSSAAIKYRAAIVTRHVKMNVETGGYDRKRMVEYNNETCVNWFSCEFKEEKEESQELPVDEDCVEEIVENFLENCGISDQNDQISTTSNANYAFGQGLYEYATRVSDAIVAVISGSIKKGIDEFLDKVYAAMSQIFAAWMPKIRAAFQWFENIKEVVKNWARTMHEKINCILVGMEDCLYMGAGLVAATCIVTLLEKFMVVTKILPAPCGAATLFLTTAMATISAAYVCTKAVEKSVMLTNVLHFVTTNCQIVLNALFNHDATKKELGANQNEGEAPTGVGQFGISTMLQDVANLMSTWSTNSVTEIGRTFGAISQIKNGILALRDMVYFVFEKLSDLAHKVLGFESQVLADLTILLGENVADWLSECDCMVSYMLEFNSRNREIFDRLSQLIEKGRLIRTGVLRTGHRGSSQVMALVTKALEKLIELHNSVVMSGSNTTRKAPFMVFFTGASGTGKTSVVQRVAINWLQEEQLGTNEIYSRNGQDPFWSGYKRHAVVTYDDFGAVPGTTSNEAEIINVISRNPYATVMAGLAEKGMYFDSRLVLASRNFLAANPESGVHDSEAYERRRHAVIRVSLKPGVPYNADDPCANQTYTLLDSKTPFREIQTFETYAELWSYLYTSFKEHEVQEELYLKSLPILDSDKKEALEGLVGLTVIATSFAPKAVMQYGMEKFPGHHFLVSDGEKCYFWHGDGSVESASVEQMQLSKQDVAQLKQQGLSTAMMYKDLAKAFPTLNSLAVLYAKNIVVKRWVGPDLEPTKTCEDVYMREQIGNLPKWQRAYLYVLSKYLTTQSPRGWFMECLEETKKNLRATYLWEYKQWPLPLKLALGSLIAIMAGGAIWYSLQSLWCMSGDASFVAGAATVFSVSSFAGQSDIPNRDNSERSFRNRKVRARTWQGQSSCFGDSALWIAETCMATLTFSNVRTQVCLAPGRGFFGVNHCLAAIPAGVMVKMDSSIGVTYFVWGKEKLLQFDGNEIALYMTSTLPKTVDSLLGRIHFDVETLPKTFSAVFFSYKYDPMIQQMVPELGSVTCKVHNKAYTLAHGEYRREIPQSLSYEASTVAGDCGSLILAEIEGKFKLVGMHVAFNGREGSASFMPYHASLDQKVGQGDFMLKYQEWAEPKILGPGCRAMGLIDPEHALAASGKTTFVETPEEWHLDYPCDKLPSVLARGDPRLAGTVHADYDPFASGMSKYAKEAGPFDAASLKQVCSGIVEIWEDASADFPMDEVDLDTAINGLENVEFFDALVLGTSEGFPYRLDRGPGDKGKSRYVSGESGSLKITDEGVLSDIAWFEEVSKTQVPDLYCIECVKDERLPIRKVLHEPKSRLFTVLPMSYNIVIRKKFLNFVRFFMKRRDVLTAQVGINPYSREWTRMANKLLSKGNNILCCDYSRFDGFLPKCIMNEIGNMIARLMKTDEVSRTQIKNLMLACTSRYAMCNRVLYRVENGIPSGFPLTVIVNSILNEILVKYAYWHCFEDNPSVQSNFDAHVSMVVYGDDNLISVSDAISSRFDGNFLVSFMEGLGIKVTDGIDKTKVGIEFRRLENCDFLKRSFKMSPDGTWRSPMSKESLWPQLHFVKAKKLEMAEAYINNCNNILRELWLHDVKEAEEFRNKVLRNLRWIGHEQLLNMQQLAVFHSEQMNGVSDFLSTCVTVDSIPLMDPLVPGMLPVKTSEIIPRVFVAAEKHFEGNFNDFFTISITTSRKFEEDKGFVLLFPYGAGRGGLPTTQFMRENVIRKGCSIQKKFRQAYEKGNNILFISQSSVVPSYVFAVMLLHSIGAISRLSSNKALTQAMQTCKRLEYLPKEYEEFF.

One can recognise an SF3 helicase domain in the interval 486–654 (LEKLIELHNS…VPYNADDPCA (169 aa)). 515–522 (GASGTGKT) is an ATP binding site. The helical transmembrane segment at 910-930 (SLWCMSGDASFVAGAATVFSV) threads the bilayer. Ser-937 is modified (O-(5'-phospho-RNA)-serine). A Peptidase C3 domain is found at 963–1165 (SSCFGDSALW…ASFMPYHASL (203 aa)). Residues His-1003, Glu-1039, and Cys-1128 each act as for picornain 3C-like protease activity in the active site. Residues 1445 to 1572 (NNILCCDYSR…SVSDAISSRF (128 aa)) form the RdRp catalytic domain.

In terms of processing, specific enzymatic cleavages by picornain 3C-like protease in vivo yield mature proteins. Picornain 3C-like protease is autocatalytically processed. Uridylylated by the polymerase and is covalently linked to the 5'-end of genomic RNA. This uridylylated form acts as a nucleotide-peptide primer for the polymerase.

Its subcellular location is the host membrane. The protein localises to the host cytoplasm. It is found in the host perinuclear region. It localises to the host endoplasmic reticulum. It catalyses the reaction RNA(n) + a ribonucleoside 5'-triphosphate = RNA(n+1) + diphosphate. In terms of biological role, thiol protease that cleaves the RNA1 and RNA2 polyproteins. Its function is as follows. Plays a role in RNA replication. It is covalently linked to the 5'terminus of both viral single-stranded RNA1 and RNA2 molecules. Down-regulates the RNA1 polyprotein processing and enhances trans-cleavage of RNA2 polyproteins. The protease cofactor and the putative helicase seem to target the replication complexes to ER membranes. Their physical association causes the membrane rearrangement of host ER that may result in formation of the small membranous vesicles that are the site of viral RNA synthesis. Functionally, the protease cofactor and the putative helicase seem to target the replication complexes to ER membranes. Their physical association causes the membrane rearrangement of host ER that may result in formation of the small membranous vesicles that are the site of viral RNA synthesis. In terms of biological role, replicates the viral genome. The polypeptide is RNA1 polyprotein (Broad bean wilt virus 2 (BBWV-2)).